We begin with the raw amino-acid sequence, 66 residues long: Large ribosomal subunit protein bL33c (66 aa).

It belongs to the bacterial ribosomal protein bL33 family.

It localises to the plastid. The protein resides in the chloroplast. The protein is Large ribosomal subunit protein bL33c of Gossypium barbadense (Sea Island cotton).